Consider the following 295-residue polypeptide: Ethanolamine ammonia-lyase small subunit (295 aa).

Adenosylcob(III)alamin-binding residues include Val207, Glu228, and Cys258.

The protein belongs to the EutC family. The basic unit is a heterodimer which dimerizes to form tetramers. The heterotetramers trimerize; 6 large subunits form a core ring with 6 small subunits projecting outwards. It depends on adenosylcob(III)alamin as a cofactor.

The protein resides in the bacterial microcompartment. The enzyme catalyses ethanolamine = acetaldehyde + NH4(+). It participates in amine and polyamine degradation; ethanolamine degradation. Catalyzes the deamination of various vicinal amino-alcohols to oxo compounds. Allows this organism to utilize ethanolamine as the sole source of nitrogen and carbon in the presence of external vitamin B12. In Escherichia coli (strain UTI89 / UPEC), this protein is Ethanolamine ammonia-lyase small subunit.